The following is a 306-amino-acid chain: Aspartate carbamoyltransferase catalytic subunit (306 aa).

The carbamoyl phosphate site is built by Arg54 and Thr55. Position 83 (Lys83) interacts with L-aspartate. Arg104, His132, and Gln135 together coordinate carbamoyl phosphate. The L-aspartate site is built by Arg165 and Arg227. Carbamoyl phosphate-binding residues include Leu266 and Pro267.

The protein belongs to the aspartate/ornithine carbamoyltransferase superfamily. ATCase family. Heterododecamer (2C3:3R2) of six catalytic PyrB chains organized as two trimers (C3), and six regulatory PyrI chains organized as three dimers (R2).

The enzyme catalyses carbamoyl phosphate + L-aspartate = N-carbamoyl-L-aspartate + phosphate + H(+). It functions in the pathway pyrimidine metabolism; UMP biosynthesis via de novo pathway; (S)-dihydroorotate from bicarbonate: step 2/3. Its function is as follows. Catalyzes the condensation of carbamoyl phosphate and aspartate to form carbamoyl aspartate and inorganic phosphate, the committed step in the de novo pyrimidine nucleotide biosynthesis pathway. The chain is Aspartate carbamoyltransferase catalytic subunit from Clostridium kluyveri (strain NBRC 12016).